The following is a 695-amino-acid chain: Eukaryotic translation initiation factor 3 subunit B (695 aa).

Basic and acidic residues predominate over residues 1 to 10 (MAKKKGDEKA). Residues 1–43 (MAKKKGDEKANPAPQSDNEEQNFEEEPDFDDPEDFVEIPEEEL) are disordered. The span at 17-43 (DNEEQNFEEEPDFDDPEDFVEIPEEEL) shows a compositional bias: acidic residues. The 85-residue stretch at 60–144 (NVVVVDGCPQ…HTFLVNLFTD (85 aa)) folds into the RRM domain. WD repeat units follow at residues 164–205 (KVQS…PLLL), 295–335 (PPDE…LLDK), 338–373 (IKIPGIRDFSWSPSDNTLAYWVAEDKDVPARVTLLE), and 444–486 (EIKE…APTL).

This sequence belongs to the eIF-3 subunit B family. Component of the eukaryotic translation initiation factor 3 (eIF-3) complex.

The protein resides in the cytoplasm. In terms of biological role, RNA-binding component of the eukaryotic translation initiation factor 3 (eIF-3) complex, which is involved in protein synthesis of a specialized repertoire of mRNAs and, together with other initiation factors, stimulates binding of mRNA and methionyl-tRNAi to the 40S ribosome. The eIF-3 complex specifically targets and initiates translation of a subset of mRNAs involved in cell proliferation. The sequence is that of Eukaryotic translation initiation factor 3 subunit B from Bombyx mori (Silk moth).